The sequence spans 116 residues: DNA-binding protein Tpen_0471 (116 aa).

It belongs to the PDCD5 family.

This is DNA-binding protein Tpen_0471 from Thermofilum pendens (strain DSM 2475 / Hrk 5).